Reading from the N-terminus, the 352-residue chain is DNA polymerase IV (352 aa).

One can recognise a UmuC domain in the interval 6 to 186; sequence IIHIDMDAFY…LPLGKIPGAG (181 aa). D10 and D104 together coordinate Mg(2+). The active site involves E105.

This sequence belongs to the DNA polymerase type-Y family. In terms of assembly, monomer. Requires Mg(2+) as cofactor.

It is found in the cytoplasm. The catalysed reaction is DNA(n) + a 2'-deoxyribonucleoside 5'-triphosphate = DNA(n+1) + diphosphate. Its function is as follows. Poorly processive, error-prone DNA polymerase involved in untargeted mutagenesis. Copies undamaged DNA at stalled replication forks, which arise in vivo from mismatched or misaligned primer ends. These misaligned primers can be extended by PolIV. Exhibits no 3'-5' exonuclease (proofreading) activity. May be involved in translesional synthesis, in conjunction with the beta clamp from PolIII. This is DNA polymerase IV from Neisseria gonorrhoeae (strain ATCC 700825 / FA 1090).